The following is a 77-amino-acid chain: Putative defensin-like protein 160 (77 aa).

The N-terminal stretch at 1–24 (MAKLSCSYFFILMLVFSALLMVEC) is a signal peptide. 4 disulfide bridges follow: Cys-30–Cys-77, Cys-40–Cys-59, Cys-45–Cys-71, and Cys-49–Cys-73.

The protein belongs to the DEFL family.

It localises to the secreted. The polypeptide is Putative defensin-like protein 160 (LCR26) (Arabidopsis thaliana (Mouse-ear cress)).